The sequence spans 398 residues: uncharacterized protein (398 aa).

This is an uncharacterized protein from Buchnera aphidicola subsp. Baizongia pistaciae (strain Bp).